The primary structure comprises 319 residues: 4-diphosphocytidyl-2-C-methyl-D-erythritol kinase (319 aa).

Residue Lys-21 is part of the active site. 106–116 (PIGAGLAGGSS) serves as a coordination point for ATP. Asp-148 is a catalytic residue.

This sequence belongs to the GHMP kinase family. IspE subfamily.

The catalysed reaction is 4-CDP-2-C-methyl-D-erythritol + ATP = 4-CDP-2-C-methyl-D-erythritol 2-phosphate + ADP + H(+). It participates in isoprenoid biosynthesis; isopentenyl diphosphate biosynthesis via DXP pathway; isopentenyl diphosphate from 1-deoxy-D-xylulose 5-phosphate: step 3/6. Catalyzes the phosphorylation of the position 2 hydroxy group of 4-diphosphocytidyl-2C-methyl-D-erythritol. The protein is 4-diphosphocytidyl-2-C-methyl-D-erythritol kinase of Prochlorococcus marinus (strain SARG / CCMP1375 / SS120).